Here is a 418-residue protein sequence, read N- to C-terminus: Glutamyl-tRNA reductase (418 aa).

Residues 49 to 52 (TCNR), serine 109, 114 to 116 (EPQ), and glutamine 120 each bind substrate. Cysteine 50 serves as the catalytic Nucleophile. 189–194 (GAGETI) lines the NADP(+) pocket.

It belongs to the glutamyl-tRNA reductase family. In terms of assembly, homodimer.

It catalyses the reaction (S)-4-amino-5-oxopentanoate + tRNA(Glu) + NADP(+) = L-glutamyl-tRNA(Glu) + NADPH + H(+). The protein operates within porphyrin-containing compound metabolism; protoporphyrin-IX biosynthesis; 5-aminolevulinate from L-glutamyl-tRNA(Glu): step 1/2. Its function is as follows. Catalyzes the NADPH-dependent reduction of glutamyl-tRNA(Glu) to glutamate 1-semialdehyde (GSA). The sequence is that of Glutamyl-tRNA reductase from Enterobacter sp. (strain 638).